Reading from the N-terminus, the 529-residue chain is Peptide chain release factor 3 (529 aa).

A tr-type G domain is found at 11 to 280 (SKRRTFAIIS…SLIKWAPSPI (270 aa)). GTP is bound by residues 20 to 27 (SHPDAGKT), 88 to 92 (DTPGH), and 142 to 145 (NKLD).

The protein belongs to the TRAFAC class translation factor GTPase superfamily. Classic translation factor GTPase family. PrfC subfamily.

The protein localises to the cytoplasm. Increases the formation of ribosomal termination complexes and stimulates activities of RF-1 and RF-2. It binds guanine nucleotides and has strong preference for UGA stop codons. It may interact directly with the ribosome. The stimulation of RF-1 and RF-2 is significantly reduced by GTP and GDP, but not by GMP. This is Peptide chain release factor 3 from Buchnera aphidicola subsp. Schizaphis graminum (strain Sg).